Here is a 58-residue protein sequence, read N- to C-terminus: Large ribosomal subunit protein bL32 (58 aa).

Belongs to the bacterial ribosomal protein bL32 family.

The chain is Large ribosomal subunit protein bL32 from Sulfurihydrogenibium sp. (strain YO3AOP1).